Reading from the N-terminus, the 627-residue chain is Coiled-coil domain-containing protein 22 (627 aa).

The sufficient for interaction with COMMD1 stretch occupies residues 1–321 (MEEADRILIH…VADIPAASQR (321 aa)). The tract at residues 1–447 (MEEADRILIH…LQDCRELESS (447 aa)) is sufficicient and required for interaction with CCDC93. Residues 321-384 (RPEQDTRAAQ…SVAEQEQALR (64 aa)) are a coiled coil. The residue at position 410 (Ser410) is a Phosphoserine. A coiled-coil region spans residues 448–535 (RRLVEIQELH…NSLSGKLDRT (88 aa)).

It belongs to the CCDC22 family. As to quaternary structure, component of the commander complex consisting of the CCC subcomplex and the retriever subcomplex. Component of the CCC (COMMD/CCDC22/CCDC93) subcomplex consisting of COMMD1, COMMD2, COMMD3, COMMD4, COMMD5, COMMD6, COMMD7, COMMD8, COMMD9, COMMD10, CCDC22 and CCDC93. Forms a coiled-coil heterodimer with CCDC22; this heterodimer interacts with the guanine nucleotide exchange factor DENND10; the interaction is direct. Interacts with CUL1, CUL2, CUL3, SKP1, BTRC. Interacts with SNX17 and SNX31. Interacts with CPNE1 and CPNE4.

It is found in the endosome. The protein resides in the cytoplasm. Its subcellular location is the cytoskeleton. The protein localises to the microtubule organizing center. It localises to the centrosome. Functionally, component of the commander complex that is essential for endosomal recycling of transmembrane cargos; the Commander complex is composed of composed of the CCC subcomplex and the retriever subcomplex. Component of the CCC complex, which is involved in the regulation of endosomal recycling of surface proteins, including integrins, signaling receptor and channels. Involved in regulation of NF-kappa-B signaling. Promotes ubiquitination of I-kappa-B-kinase subunit IKBKB and its subsequent proteasomal degradation leading to NF-kappa-B activation; the function may involve association with COMMD8 and a CUL1-dependent E3 ubiquitin ligase complex. May down-regulate NF-kappa-B activity via association with COMMD1 and involving a CUL2-dependent E3 ubiquitin ligase complex. Regulates the cellular localization of COMM domain-containing proteins, such as COMMD1 and COMMD10. Component of the CCC complex, which is involved in the regulation of endosomal recycling of surface proteins, including integrins, signaling receptor and channels. The CCC complex associates with SNX17, retriever and WASH complexes to prevent lysosomal degradation and promote cell surface recycling of numerous cargos such as integrins ITGA5:ITGB1. Plays a role in copper ion homeostasis. Involved in copper-dependent ATP7A trafficking between the trans-Golgi network and vesicles in the cell periphery; the function is proposed to depend on its association within the CCC complex and cooperation with the WASH complex on early endosomes. This chain is Coiled-coil domain-containing protein 22, found in Rattus norvegicus (Rat).